The sequence spans 317 residues: Melanocyte-stimulating hormone receptor (317 aa).

At 1-37 the chain is on the extracellular side; that stretch reads MPVQGSQRRLLGSLNSTPTATPHLGLAANQTGARCLE. Residue Asn29 is glycosylated (N-linked (GlcNAc...) asparagine). The helical transmembrane segment at 38–63 threads the bilayer; it reads MSIPDGLFLSLGLVSLVENVLVVTAI. At 64–72 the chain is on the cytoplasmic side; the sequence is AKNRNLHSP. A helical transmembrane segment spans residues 73-93; the sequence is MYCFICCLALSDLLVSGSNML. Residues 94-118 lie on the Extracellular side of the membrane; it reads ETAVTLLLEAGALAARAAVVQQLDN. The chain crosses the membrane as a helical span at residues 119 to 140; the sequence is VIDVITCSSMLSSLCFLGAIAV. At 141-163 the chain is on the cytoplasmic side; it reads DRYISIFYALRYHSIVTLPRARR. Residues 164-183 form a helical membrane-spanning segment; sequence AIAAIWVASVLCSTLFIAYY. Residues 184-191 lie on the Extracellular side of the membrane; it reads DHAAVLLC. Residues 192-211 form a helical membrane-spanning segment; that stretch reads LVVFFLAMLVLMAVLYVHML. The Cytoplasmic segment spans residues 212–240; that stretch reads ARACQHAQGIARLHKRQRLAHQGFGLKGA. The chain crosses the membrane as a helical span at residues 241 to 266; the sequence is ATLTILLGIFFLCWGPFFLHLTLIVL. At 267-279 the chain is on the extracellular side; the sequence is CPQHPTCSCIFKN. The chain crosses the membrane as a helical span at residues 280–300; the sequence is FNLFLTLIICNAIIDPLIYAF. Topologically, residues 301 to 317 are cytoplasmic; that stretch reads RSQELRRTLKEVLLCSW. The S-palmitoyl cysteine moiety is linked to residue Cys315.

It belongs to the G-protein coupled receptor 1 family. In terms of assembly, interacts with MGRN1, but does not undergo MGRN1-mediated ubiquitination; this interaction competes with GNAS-binding and thus inhibits agonist-induced cAMP production. Interacts with OPN3; the interaction results in a decrease in MC1R-mediated cAMP signaling and ultimately a decrease in melanin production in melanocytes.

The protein localises to the cell membrane. Functionally, receptor for MSH (alpha, beta and gamma) and ACTH. The activity of this receptor is mediated by G proteins which activate adenylate cyclase. Mediates melanogenesis, the production of eumelanin (black/brown) and phaeomelanin (red/yellow), via regulation of cAMP signaling in melanocytes. The protein is Melanocyte-stimulating hormone receptor (MC1R) of Macaca nemestrina (Pig-tailed macaque).